A 395-amino-acid polypeptide reads, in one-letter code: S-adenosylmethionine synthase (395 aa).

His-19 provides a ligand contact to ATP. Position 21 (Asp-21) interacts with Mg(2+). K(+) is bound at residue Glu-47. L-methionine-binding residues include Glu-60 and Gln-103. The flexible loop stretch occupies residues 103-113 (QSPDIAQGVNS). ATP-binding positions include 170–172 (DNK), 236–237 (KF), Asp-245, 251–252 (RK), Ala-268, and Lys-272. Asp-245 contributes to the L-methionine binding site. Residue Lys-276 coordinates L-methionine.

Belongs to the AdoMet synthase family. As to quaternary structure, homotetramer; dimer of dimers. Mg(2+) is required as a cofactor. K(+) serves as cofactor.

It is found in the cytoplasm. The enzyme catalyses L-methionine + ATP + H2O = S-adenosyl-L-methionine + phosphate + diphosphate. The protein operates within amino-acid biosynthesis; S-adenosyl-L-methionine biosynthesis; S-adenosyl-L-methionine from L-methionine: step 1/1. Functionally, catalyzes the formation of S-adenosylmethionine (AdoMet) from methionine and ATP. The overall synthetic reaction is composed of two sequential steps, AdoMet formation and the subsequent tripolyphosphate hydrolysis which occurs prior to release of AdoMet from the enzyme. This is S-adenosylmethionine synthase from Rhodopirellula baltica (strain DSM 10527 / NCIMB 13988 / SH1).